Reading from the N-terminus, the 438-residue chain is UPF0229 protein Smed_1028 (438 aa).

The interval 55–107 is disordered; that stretch reads PARGVNEPAFQPDSNSGERRHVLPGNREFAAGDRIPKRGGGGGAGNAGAGTGQ. Gly residues predominate over residues 92–105; it reads RGGGGGAGNAGAGT.

It belongs to the UPF0229 family.

The protein is UPF0229 protein Smed_1028 of Sinorhizobium medicae (strain WSM419) (Ensifer medicae).